Here is a 379-residue protein sequence, read N- to C-terminus: Homoserine O-acetyltransferase (379 aa).

One can recognise an AB hydrolase-1 domain in the interval 52 to 356; sequence NVVVVLHALT…VYGHDGFLVE (305 aa). Residue Ser157 is the Nucleophile of the active site. Arg227 serves as a coordination point for substrate. Active-site residues include Asp320 and His350. Asp351 provides a ligand contact to substrate.

Belongs to the AB hydrolase superfamily. MetX family. Homodimer.

The protein resides in the cytoplasm. The enzyme catalyses L-homoserine + acetyl-CoA = O-acetyl-L-homoserine + CoA. The protein operates within amino-acid biosynthesis; L-methionine biosynthesis via de novo pathway; O-acetyl-L-homoserine from L-homoserine: step 1/1. In terms of biological role, transfers an acetyl group from acetyl-CoA to L-homoserine, forming acetyl-L-homoserine. The polypeptide is Homoserine O-acetyltransferase (Mycobacterium bovis (strain ATCC BAA-935 / AF2122/97)).